Here is a 229-residue protein sequence, read N- to C-terminus: Sugar fermentation stimulation protein homolog (229 aa).

The protein belongs to the SfsA family.

This is Sugar fermentation stimulation protein homolog from Carboxydothermus hydrogenoformans (strain ATCC BAA-161 / DSM 6008 / Z-2901).